Reading from the N-terminus, the 86-residue chain is Small ribosomal subunit protein bS20 (86 aa).

Positions 1 to 27 are enriched in basic residues; sequence MANSKSAKKRATQAERRRQHNASRRSM. Residues 1–28 form a disordered region; sequence MANSKSAKKRATQAERRRQHNASRRSMM.

This sequence belongs to the bacterial ribosomal protein bS20 family.

Its function is as follows. Binds directly to 16S ribosomal RNA. This chain is Small ribosomal subunit protein bS20, found in Aliivibrio fischeri (strain MJ11) (Vibrio fischeri).